The sequence spans 680 residues: DNA ligase (680 aa).

Residues 32-36, 81-82, and Glu115 contribute to the NAD(+) site; these read DAVYD and SL. The active-site N6-AMP-lysine intermediate is the Lys117. Residues Arg138, Glu175, Lys291, and Lys315 each contribute to the NAD(+) site. Residues Cys409, Cys412, Cys427, and Cys432 each coordinate Zn(2+). The region spanning 600 to 680 is the BRCT domain; it reads ASEQHLKGLT…RLQAMLKDSP (81 aa).

The protein belongs to the NAD-dependent DNA ligase family. LigA subfamily. Mg(2+) serves as cofactor. The cofactor is Mn(2+).

It catalyses the reaction NAD(+) + (deoxyribonucleotide)n-3'-hydroxyl + 5'-phospho-(deoxyribonucleotide)m = (deoxyribonucleotide)n+m + AMP + beta-nicotinamide D-nucleotide.. In terms of biological role, DNA ligase that catalyzes the formation of phosphodiester linkages between 5'-phosphoryl and 3'-hydroxyl groups in double-stranded DNA using NAD as a coenzyme and as the energy source for the reaction. It is essential for DNA replication and repair of damaged DNA. The protein is DNA ligase of Synechococcus sp. (strain CC9902).